A 202-amino-acid chain; its full sequence is GTP cyclohydrolase 1 (202 aa).

Zn(2+)-binding residues include Cys90, His93, and Cys163.

It belongs to the GTP cyclohydrolase I family. In terms of assembly, homomer.

It catalyses the reaction GTP + H2O = 7,8-dihydroneopterin 3'-triphosphate + formate + H(+). It functions in the pathway cofactor biosynthesis; 7,8-dihydroneopterin triphosphate biosynthesis; 7,8-dihydroneopterin triphosphate from GTP: step 1/1. In Mycobacterium marinum (strain ATCC BAA-535 / M), this protein is GTP cyclohydrolase 1.